We begin with the raw amino-acid sequence, 698 residues long: FHF complex subunit HOOK-interacting protein 2B (698 aa).

The protein belongs to the FHIP family.

In Xenopus tropicalis (Western clawed frog), this protein is FHF complex subunit HOOK-interacting protein 2B (fhip2b).